The chain runs to 181 residues: Protein csk22 (181 aa).

The next 5 membrane-spanning stretches (helical) occupy residues 5 to 22 (LQSV…YKKI), 35 to 57 (WLFT…SAIH), 61 to 78 (YGYL…VFFA), 91 to 113 (IYFR…RFLY), and 140 to 162 (LTIG…IIKL).

Its subcellular location is the cell membrane. The polypeptide is Protein csk22 (csk22) (Bacillus subtilis (strain 168)).